The sequence spans 404 residues: 1-deoxy-D-xylulose 5-phosphate reductoisomerase (404 aa).

8 residues coordinate NADPH: Thr5, Gly6, Ser7, Ile8, Gly31, Arg32, Asn33, and Asn121. Lys122 is a 1-deoxy-D-xylulose 5-phosphate binding site. Glu123 provides a ligand contact to NADPH. Asp147 lines the Mn(2+) pocket. 4 residues coordinate 1-deoxy-D-xylulose 5-phosphate: Ser148, Glu149, Ser185, and His208. Mn(2+) is bound at residue Glu149. Gly214 is a binding site for NADPH. Ser221, Asn226, Lys227, and Glu230 together coordinate 1-deoxy-D-xylulose 5-phosphate. Glu230 is a binding site for Mn(2+).

It belongs to the DXR family. Requires Mg(2+) as cofactor. Mn(2+) serves as cofactor.

It carries out the reaction 2-C-methyl-D-erythritol 4-phosphate + NADP(+) = 1-deoxy-D-xylulose 5-phosphate + NADPH + H(+). Its pathway is isoprenoid biosynthesis; isopentenyl diphosphate biosynthesis via DXP pathway; isopentenyl diphosphate from 1-deoxy-D-xylulose 5-phosphate: step 1/6. Functionally, catalyzes the NADPH-dependent rearrangement and reduction of 1-deoxy-D-xylulose-5-phosphate (DXP) to 2-C-methyl-D-erythritol 4-phosphate (MEP). The chain is 1-deoxy-D-xylulose 5-phosphate reductoisomerase from Prochlorococcus marinus subsp. pastoris (strain CCMP1986 / NIES-2087 / MED4).